The chain runs to 303 residues: RELT-like protein 2 (303 aa).

The helical transmembrane segment at 15–35 threads the bilayer; sequence LYMLFLLVLVFFLMGLVGFMI. Disordered regions lie at residues 46-67 and 132-303; these read CRTS…DDDM and CLHC…AGSM. Residue Ser-52 is modified to Phosphoserine. 2 stretches are compositionally biased toward basic and acidic residues: residues 148–158 and 172–188; these read RSKEGKSRPRT and THIE…DGSP. A compositionally biased stretch (gly residues) spans 194–212; the sequence is GSGGGQDPGGGQGSGGGQP. The span at 278-296 shows a compositional bias: polar residues; the sequence is QEANGQPSKPDTSDHQVSL.

This sequence belongs to the RELT family. As to quaternary structure, interacts with RELT, RELL1 and OXSR1. Interacts with PLSCR1. Interacts with TRAF2. Post-translationally, phosphorylated in vitro by OXSR1. Primarily expressed in spleen, thymus, testis, peripheral blood leukocytes, brain and placenta. Not detected in prostate, ovary, small intestine, colon, heart, lung, liver, skeletal muscle, kidney and pancreas.

It is found in the cell membrane. Induces activation of MAPK14/p38 cascade, when overexpressed. Induces apoptosis, when overexpressed. This Homo sapiens (Human) protein is RELT-like protein 2 (RELL2).